Consider the following 456-residue polypeptide: UDP-N-acetylmuramate--L-alanine ligase (456 aa).

ATP is bound at residue 114–120 (GTHGKTT).

This sequence belongs to the MurCDEF family.

The protein localises to the cytoplasm. It carries out the reaction UDP-N-acetyl-alpha-D-muramate + L-alanine + ATP = UDP-N-acetyl-alpha-D-muramoyl-L-alanine + ADP + phosphate + H(+). Its pathway is cell wall biogenesis; peptidoglycan biosynthesis. Cell wall formation. The polypeptide is UDP-N-acetylmuramate--L-alanine ligase (Porphyromonas gingivalis (strain ATCC 33277 / DSM 20709 / CIP 103683 / JCM 12257 / NCTC 11834 / 2561)).